We begin with the raw amino-acid sequence, 345 residues long: Holliday junction branch migration complex subunit RuvB (345 aa).

A large ATPase domain (RuvB-L) region spans residues 1 to 182 (MDQRIIASSS…FGIVQRLEFY (182 aa)). Residues Ile21, Arg22, Gly63, Lys66, Thr67, Thr68, 129-131 (EDF), Arg172, Tyr182, and Arg219 each bind ATP. Thr67 provides a ligand contact to Mg(2+). A small ATPAse domain (RuvB-S) region spans residues 183-253 (SPQELTRIVI…VAQAAMQMLK (71 aa)). A head domain (RuvB-H) region spans residues 256 to 345 (PEGFDELDRR…PGIGEPGDLF (90 aa)). Residues Arg292, Arg311, and Arg316 each contribute to the DNA site.

Belongs to the RuvB family. As to quaternary structure, homohexamer. Forms an RuvA(8)-RuvB(12)-Holliday junction (HJ) complex. HJ DNA is sandwiched between 2 RuvA tetramers; dsDNA enters through RuvA and exits via RuvB. An RuvB hexamer assembles on each DNA strand where it exits the tetramer. Each RuvB hexamer is contacted by two RuvA subunits (via domain III) on 2 adjacent RuvB subunits; this complex drives branch migration. In the full resolvosome a probable DNA-RuvA(4)-RuvB(12)-RuvC(2) complex forms which resolves the HJ.

It localises to the cytoplasm. The catalysed reaction is ATP + H2O = ADP + phosphate + H(+). In terms of biological role, the RuvA-RuvB-RuvC complex processes Holliday junction (HJ) DNA during genetic recombination and DNA repair, while the RuvA-RuvB complex plays an important role in the rescue of blocked DNA replication forks via replication fork reversal (RFR). RuvA specifically binds to HJ cruciform DNA, conferring on it an open structure. The RuvB hexamer acts as an ATP-dependent pump, pulling dsDNA into and through the RuvAB complex. RuvB forms 2 homohexamers on either side of HJ DNA bound by 1 or 2 RuvA tetramers; 4 subunits per hexamer contact DNA at a time. Coordinated motions by a converter formed by DNA-disengaged RuvB subunits stimulates ATP hydrolysis and nucleotide exchange. Immobilization of the converter enables RuvB to convert the ATP-contained energy into a lever motion, pulling 2 nucleotides of DNA out of the RuvA tetramer per ATP hydrolyzed, thus driving DNA branch migration. The RuvB motors rotate together with the DNA substrate, which together with the progressing nucleotide cycle form the mechanistic basis for DNA recombination by continuous HJ branch migration. Branch migration allows RuvC to scan DNA until it finds its consensus sequence, where it cleaves and resolves cruciform DNA. This is Holliday junction branch migration complex subunit RuvB from Xanthomonas oryzae pv. oryzae (strain MAFF 311018).